Reading from the N-terminus, the 436-residue chain is Adenosylhomocysteinase (436 aa).

Positions 62, 136, and 161 each coordinate substrate. Residue 162 to 164 (TTT) coordinates NAD(+). Residues K191 and D195 each contribute to the substrate site. NAD(+) contacts are provided by residues N196, 225 to 230 (GFGDVG), E248, N283, 304 to 306 (IGH), and N352.

Belongs to the adenosylhomocysteinase family. NAD(+) serves as cofactor.

The protein resides in the cytoplasm. It catalyses the reaction S-adenosyl-L-homocysteine + H2O = L-homocysteine + adenosine. It participates in amino-acid biosynthesis; L-homocysteine biosynthesis; L-homocysteine from S-adenosyl-L-homocysteine: step 1/1. In terms of biological role, may play a key role in the regulation of the intracellular concentration of adenosylhomocysteine. The polypeptide is Adenosylhomocysteinase (Leptospira interrogans serogroup Icterohaemorrhagiae serovar copenhageni (strain Fiocruz L1-130)).